We begin with the raw amino-acid sequence, 444 residues long: NAD(+)--protein-arginine ADP-ribosyltransferase Tre1 (444 aa).

The interval 72 to 140 (PRHVTGVLAD…NDLLACSAEI (69 aa)) is PAAR domain. The 179-residue stretch at 266–444 (MTLAEAVGQE…TTHLLYREIP (179 aa)) folds into the TR mART core domain. The tract at residues 274-444 (QEQAKVWTQT…TTHLLYREIP (171 aa)) is ART domain. Active-site residues include Arg356, Ser381, and Glu415.

The protein belongs to the Arg-specific ADP-ribosyltransferase family. In terms of assembly, forms a stable complex with cognate immunity protein Tri1-Sp.

Its subcellular location is the secreted. The protein resides in the host cytoplasm. The catalysed reaction is L-arginyl-[protein] + NAD(+) = N(omega)-(ADP-D-ribosyl)-L-arginyl-[protein] + nicotinamide + H(+). Functionally, toxic component of a contact-dependent interbacterial competition system (also called effector-immunity systems). Acts by ADP-ribosylating a number of target proteins in target cells; E.coli target proteins include FtsZ, EFTu, RNase E, Fis, RL9, SucB, and LolD. FtsZ is thought to be the physiologically relevant target as it is ADP-ribosylated on a critical residue. ADP-ribosylation of FtsZ prevents formation of the FtsZ mid-cell ring and inhibits cell division. Overexpression of the whole Tre1 protein or the ART domain in E.coli is toxic; cells elongate dramatically and some undergo lysis. Toxic activity is neutralized by coexpression of the cognate immunity protein Tri1-Sp; Tri1-Sp neutralizes this protein both by binding to and occluding the active site (via Tri1's N-terminal extension) and by hydrolysis of the ADP-ribosyl moiety from the target protein. Tre1 can also be neutralized by non-cognate immunity protein Tri1-Pp from P.putida strain GB-1, with which it does not form a stable complex; DraG of R.palustris does not neutralize the toxic effects of this protein. In interbacterial competition studies Tri1 from P.putida strain B6-2 also neutralizes this protein. The sequence is that of NAD(+)--protein-arginine ADP-ribosyltransferase Tre1 from Serratia proteamaculans (strain 568).